A 101-amino-acid chain; its full sequence is Phosphoprotein OPG062 (101 aa).

Residues 51-73 (PSSPACERRPSSPSRCERMNNPG) are disordered. A phosphoserine mark is found at serine 53 and serine 62. Residues 56-68 (CERRPSSPSRCER) show a composition bias toward basic and acidic residues.

It belongs to the orthopoxvirus OPG062 family. Self-associates to form high molecular-weight forms. Interacts with protein OPG157. Interacts with host RICTOR and RPTOR; these interactions disrupt the mTORC1 and mTORC2 crosstalk. Post-translationally, phosphorylated on two serines. While these phosphorylations do not play a role in virion assembly; they are essential for the interaction with host RICTOR and RPTOR.

It is found in the virion. Its function is as follows. Plays an essential role in virion assembly and morphogenesis. Also plays a role in the inhibition of host immune response by dysregulating mTOR. Sequesters host RICTOR and RPTOR, thereby disrupting mTORC1 and mTORC2 crosstalk. In turn, blocks the host antiviral response in part through mTOR-dependent degradation of cGAS, the primary poxvirus sensor. The sequence is that of Phosphoprotein OPG062 (OPG062) from Homo sapiens (Human).